A 963-amino-acid polypeptide reads, in one-letter code: Exportin-T (963 aa).

M1 bears the N-acetylmethionine mark. An N6-acetyllysine modification is found at K635.

This sequence belongs to the exportin family. As to quaternary structure, found in a complex with XPOT, Ran and tRNA. Probably found in a complex with nucleoporins. Interacts with Ran and tRNA in a GTP-dependent manner.

It is found in the nucleus. It localises to the cytoplasm. Its function is as follows. Mediates the nuclear export of aminoacylated tRNAs. In the nucleus binds to tRNA and to the GTPase Ran in its active GTP-bound form. Docking of this trimeric complex to the nuclear pore complex (NPC) is mediated through binding to nucleoporins. Upon transit of a nuclear export complex into the cytoplasm, disassembling of the complex and hydrolysis of Ran-GTP to Ran-GDP (induced by RANBP1 and RANGAP1, respectively) cause release of the tRNA from the export receptor. XPOT then return to the nuclear compartment and mediate another round of transport. The directionality of nuclear export is thought to be conferred by an asymmetric distribution of the GTP- and GDP-bound forms of Ran between the cytoplasm and nucleus. The polypeptide is Exportin-T (Xpot) (Mus musculus (Mouse)).